The following is a 31-amino-acid chain: Cycloviolacin-O25 (31 aa).

Residues 1–31 (DIFCGETCAFIPCITHVPGTCSCKSKVCYFN) constitute a cross-link (cyclopeptide (Asp-Asn)). Cystine bridges form between C4-C21, C8-C23, and C13-C28.

In terms of processing, this is a cyclic peptide. Expressed in roots and runners but not in leaves, petals and petioles (at protein level).

Its function is as follows. Probably participates in a plant defense mechanism. In Viola odorata (Sweet violet), this protein is Cycloviolacin-O25.